A 219-amino-acid polypeptide reads, in one-letter code: Uracil-DNA glycosylase (219 aa).

Asp61 (proton acceptor) is an active-site residue.

The protein belongs to the uracil-DNA glycosylase (UDG) superfamily. UNG family.

The protein localises to the cytoplasm. It carries out the reaction Hydrolyzes single-stranded DNA or mismatched double-stranded DNA and polynucleotides, releasing free uracil.. In terms of biological role, excises uracil residues from the DNA which can arise as a result of misincorporation of dUMP residues by DNA polymerase or due to deamination of cytosine. This Neisseria meningitidis serogroup B (strain ATCC BAA-335 / MC58) protein is Uracil-DNA glycosylase.